Reading from the N-terminus, the 232-residue chain is Ubiquinone biosynthesis O-methyltransferase (232 aa).

Residues R36, G55, D76, and M120 each coordinate S-adenosyl-L-methionine.

Belongs to the methyltransferase superfamily. UbiG/COQ3 family.

The enzyme catalyses a 3-demethylubiquinol + S-adenosyl-L-methionine = a ubiquinol + S-adenosyl-L-homocysteine + H(+). The catalysed reaction is a 3-(all-trans-polyprenyl)benzene-1,2-diol + S-adenosyl-L-methionine = a 2-methoxy-6-(all-trans-polyprenyl)phenol + S-adenosyl-L-homocysteine + H(+). Its pathway is cofactor biosynthesis; ubiquinone biosynthesis. In terms of biological role, O-methyltransferase that catalyzes the 2 O-methylation steps in the ubiquinone biosynthetic pathway. The chain is Ubiquinone biosynthesis O-methyltransferase from Burkholderia multivorans (strain ATCC 17616 / 249).